A 445-amino-acid polypeptide reads, in one-letter code: Phosphoglucosamine mutase (445 aa).

Ser101 serves as the catalytic Phosphoserine intermediate. Residues Ser101, Asp240, Asp242, and Asp244 each coordinate Mg(2+). Ser101 bears the Phosphoserine mark.

Belongs to the phosphohexose mutase family. The cofactor is Mg(2+). In terms of processing, activated by phosphorylation.

The enzyme catalyses alpha-D-glucosamine 1-phosphate = D-glucosamine 6-phosphate. In terms of biological role, catalyzes the conversion of glucosamine-6-phosphate to glucosamine-1-phosphate. The protein is Phosphoglucosamine mutase of Pseudomonas aeruginosa (strain LESB58).